The sequence spans 125 residues: Small ribosomal subunit protein bS6 (125 aa).

The protein belongs to the bacterial ribosomal protein bS6 family.

In terms of biological role, binds together with bS18 to 16S ribosomal RNA. This Pasteurella multocida (strain Pm70) protein is Small ribosomal subunit protein bS6 (rpsF).